Here is a 285-residue protein sequence, read N- to C-terminus: Protease HtpX homolog (285 aa).

2 helical membrane-spanning segments follow: residues 7 to 27 and 30 to 50; these read TAMLMAAITALFIVIGGMIGG and GMTIALLFALGMNFFSYWFSD. His131 contacts Zn(2+). The active site involves Glu132. His135 lines the Zn(2+) pocket. 2 consecutive transmembrane segments (helical) span residues 146–166 and 177–197; these read ITATMAGAISALANFAMFFGG and IAGIAVALLAPIAGALIQMAI. Glu202 serves as a coordination point for Zn(2+).

This sequence belongs to the peptidase M48B family. Zn(2+) is required as a cofactor.

The protein resides in the cell inner membrane. The polypeptide is Protease HtpX homolog (Burkholderia cenocepacia (strain HI2424)).